Consider the following 531-residue polypeptide: MGSCLSSDLPPRAGAGAGASPGWPQRWRRRRQRGVERGGAVSGGGGGVFSIGVGGKKLHHGGGGGGEMTEEELAKVEGRVCVNGASAAACLHTQQGRKGTNQDAMVVWENFNTSDSVFCGVFDGHGPYGHFVAKKVRDSLPVKIRTLWKTSANEDTSSHQNGSISGSVNSEESPVVDDEWGEYADDSEKLPEMFLPLKQSYFKAFKLMDKELKMHPTVDCFCSGSTAVTLVKQGLDLVVGNLGDSRAIMGTRDAANNLTAVQLTVDLKPNLPREAARIQQCRGRVFALQDEPEVARVWLPNNDSPGLAMARAFGDFCLKDYGLISVPQISYRRLTEKDEFIILATDGVWDVLSNKEAVDIVAAAPSRATAARALVDCAVRSWRLKFPTSKSDDCAVVCLFLDHAKSPDLIQENESEEETTEDVAIPDTVAKVDQDIAQGDAHISSEEQITEPALQHSYTLRDVDEIVPVEEPPVSKEPERCGSARSLADCISTNEEEEWSALEGVTRVNSLLNLPRILSGEKRSTSWRKRR.

A disordered region spans residues 1–47 (MGSCLSSDLPPRAGAGAGASPGWPQRWRRRRQRGVERGGAVSGGGGG). Positions 10–25 (PPRAGAGAGASPGWPQ) are enriched in low complexity. One can recognise a PPM-type phosphatase domain in the interval 88–401 (AACLHTQQGR…DDCAVVCLFL (314 aa)). Aspartate 123 and glycine 124 together coordinate Mn(2+). Polar residues predominate over residues 151–172 (SANEDTSSHQNGSISGSVNSEE). Positions 151–176 (SANEDTSSHQNGSISGSVNSEESPVV) are disordered. Mn(2+)-binding residues include aspartate 346 and aspartate 392.

This sequence belongs to the PP2C family. Mg(2+) is required as a cofactor. Requires Mn(2+) as cofactor.

It catalyses the reaction O-phospho-L-seryl-[protein] + H2O = L-seryl-[protein] + phosphate. The enzyme catalyses O-phospho-L-threonyl-[protein] + H2O = L-threonyl-[protein] + phosphate. The polypeptide is Probable protein phosphatase 2C 66 (Oryza sativa subsp. japonica (Rice)).